The following is a 434-amino-acid chain: 3-phosphoshikimate 1-carboxyvinyltransferase (434 aa).

Lys-22, Ser-23, and Arg-27 together coordinate 3-phosphoshikimate. Lys-22 lines the phosphoenolpyruvate pocket. The phosphoenolpyruvate site is built by Gly-93 and Arg-121. 6 residues coordinate 3-phosphoshikimate: Ser-168, Ser-169, Gln-170, Ser-199, Asp-320, and Lys-347. Residue Gln-170 participates in phosphoenolpyruvate binding. Asp-320 functions as the Proton acceptor in the catalytic mechanism. Positions 351, 394, and 419 each coordinate phosphoenolpyruvate.

It belongs to the EPSP synthase family. In terms of assembly, monomer.

The protein resides in the cytoplasm. The enzyme catalyses 3-phosphoshikimate + phosphoenolpyruvate = 5-O-(1-carboxyvinyl)-3-phosphoshikimate + phosphate. It participates in metabolic intermediate biosynthesis; chorismate biosynthesis; chorismate from D-erythrose 4-phosphate and phosphoenolpyruvate: step 6/7. Its function is as follows. Catalyzes the transfer of the enolpyruvyl moiety of phosphoenolpyruvate (PEP) to the 5-hydroxyl of shikimate-3-phosphate (S3P) to produce enolpyruvyl shikimate-3-phosphate and inorganic phosphate. In Burkholderia multivorans (strain ATCC 17616 / 249), this protein is 3-phosphoshikimate 1-carboxyvinyltransferase.